We begin with the raw amino-acid sequence, 211 residues long: Pyridoxine/pyridoxamine 5'-phosphate oxidase (211 aa).

Residues 7 to 10 (RRDY) and K65 contribute to the substrate site. FMN contacts are provided by residues 60–65 (RIVLLK), 75–76 (YT), R81, K82, and Q104. Substrate is bound by residues Y122, R126, and S130. Residues 139 to 140 (QS) and W184 each bind FMN. A substrate-binding site is contributed by 190–192 (RLH). R194 serves as a coordination point for FMN.

Belongs to the pyridoxamine 5'-phosphate oxidase family. Homodimer. FMN serves as cofactor.

The catalysed reaction is pyridoxamine 5'-phosphate + O2 + H2O = pyridoxal 5'-phosphate + H2O2 + NH4(+). It carries out the reaction pyridoxine 5'-phosphate + O2 = pyridoxal 5'-phosphate + H2O2. It participates in cofactor metabolism; pyridoxal 5'-phosphate salvage; pyridoxal 5'-phosphate from pyridoxamine 5'-phosphate: step 1/1. It functions in the pathway cofactor metabolism; pyridoxal 5'-phosphate salvage; pyridoxal 5'-phosphate from pyridoxine 5'-phosphate: step 1/1. Catalyzes the oxidation of either pyridoxine 5'-phosphate (PNP) or pyridoxamine 5'-phosphate (PMP) into pyridoxal 5'-phosphate (PLP). This Aliivibrio salmonicida (strain LFI1238) (Vibrio salmonicida (strain LFI1238)) protein is Pyridoxine/pyridoxamine 5'-phosphate oxidase.